Reading from the N-terminus, the 419-residue chain is Methyltransferase/ribosomally synthesized type I borosin cyclic peptide precursor gjuMa (419 aa).

Residues 1–255 form a methyltransferase domain region; it reads MATPIATTTN…AISTLYVPPR (255 aa). Active-site residues include Arg79, Tyr83, and Tyr105. S-adenosyl-L-methionine is bound by residues Tyr105, His107, Val110, Ala137, Gln179, Gly217, Ser248, and Thr249. A clasp domain region spans residues 256 to 381; it reads DISPVDPTMA…GAVYALMSRP (126 aa). Positions 382–404 are precursor leader; it reads TGDIAREKELTNDEIANNHGAPY. The residue at position 408 (Ser408) is an N-methylserine. Ala409 bears the N-methylalanine mark. Val410 bears the N-methylvaline mark. Residues Ile411 and Ile412 each carry the N-methylisoleucine modification. Residues Ala413 and Ala414 each carry the N-methylalanine modification. Residues Ile415 and Ile416 each carry the N-methylisoleucine modification.

This sequence in the N-terminal section; belongs to the precorrin methyltransferase family. As to quaternary structure, homodimer. Post-translationally, gjuMA automethylates at Ser-408, Ala-409, Val-410, Ile-411, Ile-412, Ala-413, Ala-414, Ile-415 and Ile-416 before being processed by ae prolyloligopeptidase which likely forms a peptidyl ester upon removal of the follower propeptide, which then undergoes macrocyclization with the N-terminus of the modified core peptide. Peptide backbone alpha-N-methylations change the physicochemical properties of amide bonds to provide structural constraints and other favorable characteristics including biological membrane permeability to peptides.

It functions in the pathway secondary metabolite biosynthesis. Functionally, fusion protein of the methyltransferase gjuM and the type I borosin core peptide; part of the gene cluster that mediates the biosynthesis of a type I borosin, a highly methylated cyclic peptide with potent biological activities. Type I borosins derive from the C-terminus of the fusion protein, and it is the same protein that methylates its own C-terminus using S-adenosyl methionine (SAM). The C-terminus is subsequently cleaved off and macrocyclized by a prolyloligopeptidase to give the final product. The protein is Methyltransferase/ribosomally synthesized type I borosin cyclic peptide precursor gjuMa of Gymnopilus junonius (Spectacular rustgill mushroom).